The chain runs to 28 residues: WFRSFKSYYGHHGSVYRPNEPNFRSFAS.

As to expression, expressed by the venom duct.

It is found in the secreted. Potent inhibitor of human alpha-3-beta-2 nAChRs (IC(50)=566.2 nM). Irreversibly inhibits the acetylcholine-induced response on human alpha-7/CHRNA7 (55% inhibition at 5.6 uM) and alpha-3-beta-2/CHRNA3-CHRNB2 (91% inhibition) nAChRs. The chain is Turritoxin F21-2 from Polystira nobilis (Sea snail).